The chain runs to 55 residues: ATP synthase protein 8 (55 aa).

The chain crosses the membrane as a helical span at residues 6–26 (PHPWFAILVFSWIFFLVILPK).

This sequence belongs to the ATPase protein 8 family. As to quaternary structure, F-type ATPases have 2 components, CF(1) - the catalytic core - and CF(0) - the membrane proton channel.

The protein resides in the mitochondrion membrane. Its function is as follows. Mitochondrial membrane ATP synthase (F(1)F(0) ATP synthase or Complex V) produces ATP from ADP in the presence of a proton gradient across the membrane which is generated by electron transport complexes of the respiratory chain. F-type ATPases consist of two structural domains, F(1) - containing the extramembraneous catalytic core and F(0) - containing the membrane proton channel, linked together by a central stalk and a peripheral stalk. During catalysis, ATP synthesis in the catalytic domain of F(1) is coupled via a rotary mechanism of the central stalk subunits to proton translocation. Part of the complex F(0) domain. Minor subunit located with subunit a in the membrane. The protein is ATP synthase protein 8 (MT-ATP8) of Squalus acanthias (Spiny dogfish).